The following is a 130-amino-acid chain: Large ribosomal subunit protein bL12 (130 aa).

Belongs to the bacterial ribosomal protein bL12 family. Homodimer. Part of the ribosomal stalk of the 50S ribosomal subunit. Forms a multimeric L10(L12)X complex, where L10 forms an elongated spine to which 2 to 4 L12 dimers bind in a sequential fashion. Binds GTP-bound translation factors.

Its function is as follows. Forms part of the ribosomal stalk which helps the ribosome interact with GTP-bound translation factors. Is thus essential for accurate translation. The sequence is that of Large ribosomal subunit protein bL12 from Nostoc sp. (strain PCC 7120 / SAG 25.82 / UTEX 2576).